Consider the following 415-residue polypeptide: 3-isopropylmalate dehydratase large subunit (415 aa).

[4Fe-4S] cluster contacts are provided by C297, C355, and C358.

This sequence belongs to the aconitase/IPM isomerase family. LeuC type 2 subfamily. Heterodimer of LeuC and LeuD. [4Fe-4S] cluster is required as a cofactor.

It catalyses the reaction (2R,3S)-3-isopropylmalate = (2S)-2-isopropylmalate. Its pathway is amino-acid biosynthesis; L-leucine biosynthesis; L-leucine from 3-methyl-2-oxobutanoate: step 2/4. Catalyzes the isomerization between 2-isopropylmalate and 3-isopropylmalate, via the formation of 2-isopropylmaleate. In Sulfurisphaera tokodaii (strain DSM 16993 / JCM 10545 / NBRC 100140 / 7) (Sulfolobus tokodaii), this protein is 3-isopropylmalate dehydratase large subunit.